Reading from the N-terminus, the 507-residue chain is Mandelamide hydrolase (507 aa).

Catalysis depends on charge relay system residues lysine 100 and serine 180. Serine 204 (acyl-ester intermediate) is an active-site residue.

Monomer.

The catalysed reaction is (R)-mandelamide + H2O = (R)-mandelate + NH4(+). With respect to regulation, inhibited by 3,4-dichloroisocoumarin and PMSF. Its function is as follows. Hydrolyzes both the R- and the S-enantiomers of mandelamide, and phenylacetamide. Has lower activity on 3-phenylpropionaide and lactamide. Does not hydrolyze benzamide. Hydrolyzes esters and amides with little steric bulk. Preferentially hydrolyzes aromatic substrates. This Pseudomonas putida (Arthrobacter siderocapsulatus) protein is Mandelamide hydrolase.